A 779-amino-acid chain; its full sequence is Endonuclease MutS2 (779 aa).

Residue 328–335 coordinates ATP; it reads GPNTGGKT. One can recognise a Smr domain in the interval 704–779; that stretch reads LDLRGKRYEE…GSGATIVTLG (76 aa).

It belongs to the DNA mismatch repair MutS family. MutS2 subfamily. As to quaternary structure, homodimer. Binds to stalled ribosomes, contacting rRNA.

Its function is as follows. Endonuclease that is involved in the suppression of homologous recombination and thus may have a key role in the control of bacterial genetic diversity. Acts as a ribosome collision sensor, splitting the ribosome into its 2 subunits. Detects stalled/collided 70S ribosomes which it binds and splits by an ATP-hydrolysis driven conformational change. Acts upstream of the ribosome quality control system (RQC), a ribosome-associated complex that mediates the extraction of incompletely synthesized nascent chains from stalled ribosomes and their subsequent degradation. Probably generates substrates for RQC. This Streptococcus agalactiae serotype Ia (strain ATCC 27591 / A909 / CDC SS700) protein is Endonuclease MutS2.